The following is a 196-amino-acid chain: Hypoxanthine/guanine phosphoribosyltransferase (196 aa).

The protein belongs to the purine/pyrimidine phosphoribosyltransferase family. Archaeal HPRT subfamily. Homodimer.

It is found in the cytoplasm. It carries out the reaction IMP + diphosphate = hypoxanthine + 5-phospho-alpha-D-ribose 1-diphosphate. The catalysed reaction is GMP + diphosphate = guanine + 5-phospho-alpha-D-ribose 1-diphosphate. Its pathway is purine metabolism; IMP biosynthesis via salvage pathway; IMP from hypoxanthine: step 1/1. Its function is as follows. Catalyzes a salvage reaction resulting in the formation of IMP that is energically less costly than de novo synthesis. This chain is Hypoxanthine/guanine phosphoribosyltransferase, found in Methanocaldococcus sp. (strain FS406-22).